The primary structure comprises 224 residues: Late embryogenesis abundant protein, group 3 (224 aa).

2 disordered regions span residues 1–169 and 193–224; these read MASN…KDKT and NTLG…TRNH. The span at 13 to 23 shows a compositional bias: basic and acidic residues; the sequence is GETKARNEEKT. 5 consecutive repeat copies span residues 26-36, 37-47, 48-58, 59-69, and 70-80. Residues 26-153 form a 12 X 11 AA tandem repeats region; the sequence is VMGATKDKAG…TEAAKQKASE (128 aa). Basic and acidic residues-rich tracts occupy residues 41 to 85, 92 to 109, and 120 to 151; these read TKQK…KDKT, AKEK…RAAQ, and EKTE…KQKA. The stretch at 81–87 is one 6; truncated repeat; the sequence is AKDKTAQ. A run of 5 repeats spans residues 88–98, 99–109, 121–131, 132–142, and 143–153. Over residues 200–224 the composition is skewed to low complexity; that stretch reads DNTITTKDNTTGATTKDTTTTTRNH.

The protein belongs to the LEA type 4 family.

In Triticum aestivum (Wheat), this protein is Late embryogenesis abundant protein, group 3.